A 42-amino-acid polypeptide reads, in one-letter code: Photosystem II reaction center protein J (42 aa).

The chain crosses the membrane as a helical span at residues 10 to 30 (IPLWLVGTVVGLLAIGLLALF).

This sequence belongs to the PsbJ family. As to quaternary structure, PSII is composed of 1 copy each of membrane proteins PsbA, PsbB, PsbC, PsbD, PsbE, PsbF, PsbH, PsbI, PsbJ, PsbK, PsbL, PsbM, PsbT, PsbX, PsbY, PsbZ, Psb30/Ycf12, at least 3 peripheral proteins of the oxygen-evolving complex and a large number of cofactors. It forms dimeric complexes.

Its subcellular location is the plastid. The protein resides in the chloroplast thylakoid membrane. In terms of biological role, one of the components of the core complex of photosystem II (PSII). PSII is a light-driven water:plastoquinone oxidoreductase that uses light energy to abstract electrons from H(2)O, generating O(2) and a proton gradient subsequently used for ATP formation. It consists of a core antenna complex that captures photons, and an electron transfer chain that converts photonic excitation into a charge separation. The protein is Photosystem II reaction center protein J of Mesostigma viride (Green alga).